A 338-amino-acid polypeptide reads, in one-letter code: Dihydroorotate dehydrogenase (quinone) (338 aa).

Residues 59-63 (AGLDK) and T83 contribute to the FMN site. Residue K63 coordinates substrate. 108-112 (NRMGF) contributes to the substrate binding site. FMN contacts are provided by N136 and N169. N169 provides a ligand contact to substrate. The Nucleophile role is filled by S172. Position 174 (N174) interacts with substrate. FMN contacts are provided by K214 and T242. Substrate is bound at residue 243 to 244 (NT). FMN is bound by residues G265, G294, and 315 to 316 (YS).

The protein belongs to the dihydroorotate dehydrogenase family. Type 2 subfamily. As to quaternary structure, monomer. Requires FMN as cofactor.

The protein resides in the cell membrane. It carries out the reaction (S)-dihydroorotate + a quinone = orotate + a quinol. It participates in pyrimidine metabolism; UMP biosynthesis via de novo pathway; orotate from (S)-dihydroorotate (quinone route): step 1/1. In terms of biological role, catalyzes the conversion of dihydroorotate to orotate with quinone as electron acceptor. The sequence is that of Dihydroorotate dehydrogenase (quinone) from Azoarcus sp. (strain BH72).